The sequence spans 662 residues: Carboxysome assembly protein CsoS2 (662 aa).

The interval 1–227 (MSTSNAQSGR…KRRNAKEAPQ (227 aa)) is N-terminal domain. Disordered stretches follow at residues 1 to 258 (MSTS…SESG), 277 to 322 (NCDV…TCSA), and 342 to 419 (PAKS…RGSC). One copy of the N-repeat 1 repeat lies at 8–27 (SGRAAAIARRNAQVKGKGYT). 2 stretches are compositionally biased toward low complexity: residues 28-57 (ASAA…SQPS) and 64-76 (SVAP…ASAA). An N-repeat 2 repeat occupies 58–72 (RSRRKVSVAPTATPA). Over residues 120-135 (RQAKAEKPTKRSERRT) the composition is skewed to basic and acidic residues. The segment covering 141–150 (VASQQPSGRL) has biased composition (polar residues). Residues 147–168 (SGRLQSKAYRKAQAKGKAGQEA) form an N-repeat 3 repeat. 3 stretches are compositionally biased toward low complexity: residues 161–170 (KGKAGQEAFK), 237–247 (GQSVSGTQVGQ), and 289–300 (VTQTQTTRGQVV). 5 M-repeat repeats span residues 228-278 (KVGE…SKNC), 288-338 (KVTQ…KMYC), 388-436 (KVMP…AKAC), 446-491 (KVTA…TEQF), and 496-550 (VDEQ…AMVC). A middle region region spans residues 228–559 (KVGESQTLHG…CDSTNAAAPG (332 aa)). The span at 391 to 404 (PSQTAKGNTTTGSQ) shows a compositional bias: polar residues. The C-terminal domain stretch occupies residues 560–631 (ESDFPAMIGQ…SPMGASQYRP (72 aa)). One copy of the C-repeat 1 repeat lies at 564–572 (PAMIGQAQP). 2 disordered regions span residues 588–607 (KITG…DGPW) and 619–662 (AGQS…GARA). A C-terminal peptide region spans residues 632-662 (VNNEVPMSPITGSSGNTDTGAKVTLSGGARA). The segment covering 641–650 (ITGSSGNTDT) has biased composition (polar residues).

It belongs to the CsoS2 family. In terms of assembly, interacts via its N-terminal repeats with RuBisCO. Interacts with the major shell protein CsoS1. Unlike H.neapolitanus and predictions for P.marinus strain MIT 9313, this protein is not thought to have ribosomal frameshifting.

It is found in the carboxysome. Functionally, required for alpha-carboxysome (Cb) assembly, mediates interaction between RuBisCO and the Cb shell. The protein is probably intrinsically disordered. The C-terminal repeats act as the encapsulation signal to target proteins to the Cb; they are necessary and sufficient to target both CsoS2 and foreign proteins to the Cb. The N-terminal repeats of this protein bind simultaneously to both subunits of RuBisCO. Probably also interacts with the major shell proteins (CsoS1); that interaction would increase the local concentration of CsoS2 so that it can condense RuBisCO and full carboxysomes can be formed. The protein is Carboxysome assembly protein CsoS2 of Hydrogenovibrio crunogenus (strain DSM 25203 / XCL-2) (Thiomicrospira crunogena).